The sequence spans 131 residues: Small ribosomal subunit protein uS9 (131 aa).

The protein belongs to the universal ribosomal protein uS9 family.

In Mesoplasma florum (strain ATCC 33453 / NBRC 100688 / NCTC 11704 / L1) (Acholeplasma florum), this protein is Small ribosomal subunit protein uS9.